An 804-amino-acid polypeptide reads, in one-letter code: Protein-lysine N-methyltransferase SMYD4 (804 aa).

112 to 114 (RSA) contacts S-adenosyl-L-methionine. Positions 233 to 574 (SSVGLCIDPL…KGQEILHCYG (342 aa)) constitute an SET domain. Zn(2+)-binding residues include Cys296, Cys299, Cys309, Cys312, Cys318, Cys322, His331, and Cys335. The segment at 296-335 (CHRCLKHTLATVPCDGCSYAKYCSQECLQQAWELYHRTEC) adopts an MYND-type zinc-finger fold. S-adenosyl-L-methionine is bound by residues Asn427, 539-540 (NH), Tyr573, and Phe595.

Belongs to the class V-like SAM-binding methyltransferase superfamily. Interacts (via MYND-type zinc finger) with HDAC1.

The protein resides in the nucleus. It localises to the cytoplasm. It carries out the reaction L-lysyl-[protein] + S-adenosyl-L-methionine = N(6)-methyl-L-lysyl-[protein] + S-adenosyl-L-homocysteine + H(+). Its function is as follows. Protein-lysine N-methyltransferase. Monomethylates PRMT5, modulating its transcriptional activity. May also act as a histone methyltransferase. Plays a critical role in cardiac development. Acts as a key epigenetic regulator of gene expression during cardiac development via its dual activities as a methyltransferase and negative regulator of HDAC1. The protein is Protein-lysine N-methyltransferase SMYD4 (SMYD4) of Pongo abelii (Sumatran orangutan).